A 331-amino-acid polypeptide reads, in one-letter code: Decarboxylase orsB (331 aa).

Zn(2+) contacts are provided by His11, His157, and Asp284.

Belongs to the metallo-dependent hydrolases superfamily. ACMSD family.

It functions in the pathway secondary metabolite biosynthesis. Functionally, decarboxylase; part of the gene cluster that mediates the biosynthesis of orsellinic acid, as well as of the cathepsin K inhibitors F9775 A and F9775 B. The non-reducing polyketide synthase orsA produces orsellinic acid by condensing acetyl-CoA with 3 malonyl-CoA units. Further modifications by the decarboxylase orsB and the tyrosinase-like protein orsC lead to the production of F9775 A and F9775 B. The functions of orsD and orsE remain unclear since only orsB and orsC are required to convert orsellinic acid into F9775 A and F9775 B. The chain is Decarboxylase orsB from Emericella nidulans (strain FGSC A4 / ATCC 38163 / CBS 112.46 / NRRL 194 / M139) (Aspergillus nidulans).